We begin with the raw amino-acid sequence, 298 residues long: Ethanolamine ammonia-lyase small subunit (298 aa).

Positions 210, 231, and 261 each coordinate adenosylcob(III)alamin.

This sequence belongs to the EutC family. The basic unit is a heterodimer which dimerizes to form tetramers. The heterotetramers trimerize; 6 large subunits form a core ring with 6 small subunits projecting outwards. The cofactor is adenosylcob(III)alamin.

The protein localises to the bacterial microcompartment. It catalyses the reaction ethanolamine = acetaldehyde + NH4(+). The protein operates within amine and polyamine degradation; ethanolamine degradation. Catalyzes the deamination of various vicinal amino-alcohols to oxo compounds. Allows this organism to utilize ethanolamine as the sole source of nitrogen and carbon in the presence of external vitamin B12. The chain is Ethanolamine ammonia-lyase small subunit from Salmonella dublin (strain CT_02021853).